The primary structure comprises 604 residues: Sulfite reductase [NADPH] flavoprotein alpha-component (604 aa).

A Flavodoxin-like domain is found at 66–204 (VTVLSASQTG…AADGWTGRIV (139 aa)). FMN-binding positions include 72–77 (SQTGNA), 119–122 (STQG), and 155–164 (LGDSSYPNFC). Residues 212–231 (AKNRATPAPQTTPPAGLQTA) form a disordered region. A compositionally biased stretch (low complexity) spans 216-231 (ATPAPQTTPPAGLQTA). Positions 239-453 (ADPFPAALLA…VERNDGFRLP (215 aa)) constitute an FAD-binding FR-type domain. Residues T327, Q361, 391–394 (RLYS), 409–411 (TVG), and 424–427 (GGAS) each bind FAD. NADP(+)-binding positions include 524 to 525 (SR), 530 to 534 (KIYVQ), and D566. FAD is bound at residue Y604.

The protein belongs to the NADPH-dependent sulphite reductase flavoprotein subunit CysJ family. This sequence in the N-terminal section; belongs to the flavodoxin family. In the C-terminal section; belongs to the flavoprotein pyridine nucleotide cytochrome reductase family. As to quaternary structure, alpha(8)-beta(8). The alpha component is a flavoprotein, the beta component is a hemoprotein. Requires FAD as cofactor. The cofactor is FMN.

It carries out the reaction hydrogen sulfide + 3 NADP(+) + 3 H2O = sulfite + 3 NADPH + 4 H(+). It participates in sulfur metabolism; hydrogen sulfide biosynthesis; hydrogen sulfide from sulfite (NADPH route): step 1/1. Its function is as follows. Component of the sulfite reductase complex that catalyzes the 6-electron reduction of sulfite to sulfide. This is one of several activities required for the biosynthesis of L-cysteine from sulfate. The flavoprotein component catalyzes the electron flow from NADPH -&gt; FAD -&gt; FMN to the hemoprotein component. This chain is Sulfite reductase [NADPH] flavoprotein alpha-component, found in Neisseria meningitidis serogroup C / serotype 2a (strain ATCC 700532 / DSM 15464 / FAM18).